Reading from the N-terminus, the 340-residue chain is Uroporphyrinogen decarboxylase (340 aa).

Residues 21-25 (RQAGR), Asp-71, Tyr-148, Ser-203, and His-316 contribute to the substrate site.

This sequence belongs to the uroporphyrinogen decarboxylase family. Homodimer.

Its subcellular location is the cytoplasm. It carries out the reaction uroporphyrinogen III + 4 H(+) = coproporphyrinogen III + 4 CO2. It participates in porphyrin-containing compound metabolism; protoporphyrin-IX biosynthesis; coproporphyrinogen-III from 5-aminolevulinate: step 4/4. In terms of biological role, catalyzes the decarboxylation of four acetate groups of uroporphyrinogen-III to yield coproporphyrinogen-III. The chain is Uroporphyrinogen decarboxylase from Campylobacter lari (strain RM2100 / D67 / ATCC BAA-1060).